The sequence spans 108 residues: Ig kappa chain V region GOM (108 aa).

A framework-1 region spans residues aspartate 1–cysteine 23. Cysteine 23 and cysteine 88 are disulfide-bonded. The segment at arginine 24–asparagine 34 is complementarity-determining-1. The tract at residues tryptophan 35–glutamate 49 is framework-2. Residues proline 44 to glycine 66 form a disordered region. The tract at residues glutamine 50–serine 56 is complementarity-determining-2. A framework-3 region spans residues glycine 57–cysteine 88. The segment at methionine 89 to threonine 97 is complementarity-determining-3. A framework-4 region spans residues phenylalanine 98–arginine 107.

This Canis lupus familiaris (Dog) protein is Ig kappa chain V region GOM.